The chain runs to 388 residues: MTISETWLLPDGVADVLPEQAQVIEKLRREAIDFLAVRGYQLVYTPFIEYIESLSSLSESNQDLDLVTFKVIDQLSGRLLGIRADMTPQVARIDAHVRPVEGVARYCYAGTVLHTKPQNFNATRAPLQLGAELYGHDSIEADVEMVYVMLGLIENAYTLQGAHLDLGHVGLFRSLVKYAGLSKNEEHELSDLYQRKALPELAEFTQNLNMGSDFYALGRYASDLDALQVHLSADILKDTEFDAALNALKITLEQIKNRWPALNVGIDVVELRSYHYHTGLMYAVYAPNRAAPLAQGGRYDGIGEHFGRARPATGFSCDLYALGANQFAEIETVVAPKGTEADLLKAIANARSEGLRVVQLLGNDDLSSIPYATHQLVLQNGQWNIEKI.

The protein belongs to the class-II aminoacyl-tRNA synthetase family. HisZ subfamily. Heteromultimer composed of HisG and HisZ subunits.

The protein localises to the cytoplasm. It functions in the pathway amino-acid biosynthesis; L-histidine biosynthesis; L-histidine from 5-phospho-alpha-D-ribose 1-diphosphate: step 1/9. Its function is as follows. Required for the first step of histidine biosynthesis. May allow the feedback regulation of ATP phosphoribosyltransferase activity by histidine. This is ATP phosphoribosyltransferase regulatory subunit from Acinetobacter baumannii (strain SDF).